The chain runs to 2717 residues: Naringenin synthase (2717 aa).

The adenylation (A) domain stretch occupies residues 13-422; it reads HHAVESRDKV…VGRKKELIIR (410 aa). In terms of domain architecture, Carrier 1 spans 531 to 617; sequence AAVEALVLAE…AVRDYLFNRL (87 aa). Position 576 is an O-(pantetheine 4'-phosphoryl)serine (serine 576). The Ketosynthase family 3 (KS3) domain occupies 638–1066; the sequence is AEPIAIISMA…GTNAHIILEQ (429 aa). Catalysis depends on for beta-ketoacyl synthase activity residues cysteine 810, histidine 945, and histidine 988. The 259-residue stretch at 1204–1462 folds into the Malonyl-CoA:ACP transacylase (MAT) domain; it reads PIFSRAFKEA…GPSAVLSPHV (259 aa). An N-terminal hotdog fold region spans residues 1549–1688; it reads HGVLYRTTSI…GTLKLISLPP (140 aa). The region spanning 1549-1847 is the PKS/mFAS DH domain; sequence HGVLYRTTSI…LRAVQPPVVE (299 aa). Residues 1561 to 1842 form a dehydratase (DH) domain region; that stretch reads TNDIICAGFV…ISEVMLRAVQ (282 aa). Histidine 1581 (proton acceptor; for dehydratase activity) is an active-site residue. The C-terminal hotdog fold stretch occupies residues 1703–1847; the sequence is NSEVDVSKAY…LRAVQPPVVE (145 aa). Aspartate 1764 (proton donor; for dehydratase activity) is an active-site residue. The region spanning 2008–2186 is the Ketoreductase (KR) domain; it reads GTVLITGGTG…AVSLAWGPWA (179 aa). The region spanning 2277–2354 is the Carrier 2 domain; that stretch reads SRSDTLLGLV…ALVQYLLDRI (78 aa). The residue at position 2313 (serine 2313) is an O-(pantetheine 4'-phosphoryl)serine. The span at 2361 to 2373 shows a compositional bias: acidic residues; the sequence is EIELDQDVAEEET. The disordered stretch occupies residues 2361-2412; it reads EIELDQDVAEEETVSGTNGHQNGHQNGTQNGHSNGHANGASTNGDATDGIDP. A compositionally biased stretch (low complexity) spans 2375–2396; sequence SGTNGHQNGHQNGTQNGHSNGH. The thioester reductase (TE) domain stretch occupies residues 2497-2711; the sequence is SLSVYSAVAA…AIAVEIEHWA (215 aa).

In the N-terminal section; belongs to the NRP synthetase family. It depends on pantetheine 4'-phosphate as a cofactor.

Its function is as follows. PKS-NRPS hybrid synthetase that, alone, is sufficient to produce naringenin chalcone, the direct precursor of naringenin, by using p-coumaric acid (p-CA) or p-hydroxybenzoic acid (p-HBA) with the involvement of malonyl-CoA molecules. The adenylation (A) domain activates p-CA or p-HBA as adenylates, which are transferred to the thiol group of the pantetheinyl residue of the T domain, and further transferred to the adjacent PKS portion of fnsA. Besides p-CA and p-HBA, the A domain is also able to activate other substrates such as cinnamic acid and salicyclic acid. Within the PKS portion of fnsA, p-CA and p-HBA act as starter units for respectively three or four malonyl-CoA molecules for elongation by the AT and KS domains of fnsA. Afterwards, naringenin chalcone is cyclized through Claisen condensation and thereby released either spontaneously or catalyzed by the TE domain. Finally, naringenin chalcone is converted to naringenin spontaneously or by a chalcone isomerase. This Pestalotiopsis fici (strain W106-1 / CGMCC3.15140) protein is Naringenin synthase.